Consider the following 310-residue polypeptide: Choline trimethylamine-lyase activating enzyme (310 aa).

Positions 17–304 (YDGPGVRTLV…EACIRKYDFP (288 aa)) constitute a Radical SAM core domain. Positions 31, 35, 38, 57, 60, 63, and 99 each coordinate [4Fe-4S] cluster. 37-39 (WCS) is a binding site for S-adenosyl-L-methionine. 4Fe-4S ferredoxin-type domains lie at 48-77 (YQVL…ISAS) and 79-109 (LRHG…VVGE). S-adenosyl-L-methionine is bound by residues Gly139, 188–190 (DVK), and His264.

It belongs to the organic radical-activating enzymes family. As to quaternary structure, monomer. [4Fe-4S] cluster serves as cofactor.

The enzyme catalyses glycyl-[protein] + reduced [flavodoxin] + S-adenosyl-L-methionine = glycin-2-yl radical-[protein] + semiquinone [flavodoxin] + 5'-deoxyadenosine + L-methionine + H(+). It participates in amine and polyamine metabolism; choline degradation. In terms of biological role, catalyzes activation of the choline trimethylamine-lyase CutC under anaerobic conditions by generation of an organic free radical on a glycine residue, via a homolytic cleavage of S-adenosyl-L-methionine (SAM). Is involved in the anaerobic choline utilization pathway that allows D.alaskensis to grow on choline as a source of carbon and energy. This is Choline trimethylamine-lyase activating enzyme from Oleidesulfovibrio alaskensis (strain ATCC BAA-1058 / DSM 17464 / G20) (Desulfovibrio alaskensis).